The chain runs to 341 residues: Eukaryotic translation initiation factor 2 subunit 1 (341 aa).

In terms of domain architecture, S1 motif spans 18-89 (NELVMVRIES…DKGYIDLSKR (72 aa)). Residues 301-341 (LMEQLEVENQDGDGEEHEDDDDDDDDEEEEEKPKEKKSSRK) form a disordered region. A compositionally biased stretch (acidic residues) spans 303–330 (EQLEVENQDGDGEEHEDDDDDDDDEEEE). The segment covering 331–341 (EKPKEKKSSRK) has biased composition (basic and acidic residues).

This sequence belongs to the eIF-2-alpha family. In terms of assembly, eukaryotic translation initiation factor 2 eIF2 is a heterotrimeric complex composed of an alpha, a beta and a gamma subunit.

The protein resides in the cytoplasm. The protein localises to the cytosol. Functionally, eIF-2 functions in the early steps of protein synthesis by forming a ternary complex with GTP and initiator tRNA. This complex binds to a 40S ribosomal subunit, followed by mRNA binding to form a 43S pre-initiation complex. Junction of the 60S ribosomal subunit to form the 80S initiation complex is preceded by hydrolysis of the GTP bound to eIF-2 and release of an eIF-2-GDP binary complex. In order for eIF-2 to recycle and catalyze another round of initiation, the GDP bound to eIF-2 must exchange with GTP by way of a reaction catalyzed by eIF2B. The sequence is that of Eukaryotic translation initiation factor 2 subunit 1 (eif2s1) from Dictyostelium discoideum (Social amoeba).